Reading from the N-terminus, the 375-residue chain is o-succinylbenzoate synthase (375 aa).

Residue lysine 166 is the Proton donor of the active site. Mg(2+)-binding residues include aspartate 191, glutamate 216, and aspartate 241. The active-site Proton acceptor is lysine 265.

It belongs to the mandelate racemase/muconate lactonizing enzyme family. MenC type 2 subfamily. In terms of assembly, homotetramer. A divalent metal cation is required as a cofactor.

The enzyme catalyses (1R,6R)-6-hydroxy-2-succinyl-cyclohexa-2,4-diene-1-carboxylate = 2-succinylbenzoate + H2O. The catalysed reaction is N-acetyl-D-methionine = N-acetyl-L-methionine. The protein operates within quinol/quinone metabolism; 1,4-dihydroxy-2-naphthoate biosynthesis; 1,4-dihydroxy-2-naphthoate from chorismate: step 4/7. Its pathway is quinol/quinone metabolism; menaquinone biosynthesis. Functionally, converts 2-succinyl-6-hydroxy-2,4-cyclohexadiene-1-carboxylate (SHCHC) to 2-succinylbenzoate (OSB). Also acts as a N-succinylamino acid racemase (NSAR) that catalyzes the racemization of N-succinyl-D/L-phenylalanine. Can catalyze the racemization of a broad range of N-acylamino acids, including N-acetyl-D-methionine, N-formyl-D/L-methionine, N-formyl-D/L-norleucine, N-formyl-D/L-aminobutyric acid, N-formyl-D/L-norvaline, N-formyl-D/L-homophenylalanine, N-carbamoyl-D-methionine and N-carbamoyl-D-norleucine. May be a bifunctional enzyme involved in menaquinone biosynthesis and in an irreversible pathway for the conversion of D- to L-amino acids, thereby facilitating the survival and/or growth of the organism. The chain is o-succinylbenzoate synthase from Geobacillus stearothermophilus (Bacillus stearothermophilus).